The primary structure comprises 484 residues: tRNA sulfurtransferase (484 aa).

A THUMP domain is found at 61–165 (TLLVELLGRI…NDKMMLIKAR (105 aa)). ATP-binding positions include 183–184 (LI), Lys265, Gly287, and Gln296. An intrachain disulfide couples Cys344 to Cys456. Residues 404–484 (LSANEVILDI…DNVKVLNKIS (81 aa)) form the Rhodanese domain. Cys456 (cysteine persulfide intermediate) is an active-site residue.

This sequence belongs to the ThiI family.

The protein resides in the cytoplasm. It carries out the reaction [ThiI sulfur-carrier protein]-S-sulfanyl-L-cysteine + a uridine in tRNA + 2 reduced [2Fe-2S]-[ferredoxin] + ATP + H(+) = [ThiI sulfur-carrier protein]-L-cysteine + a 4-thiouridine in tRNA + 2 oxidized [2Fe-2S]-[ferredoxin] + AMP + diphosphate. The enzyme catalyses [ThiS sulfur-carrier protein]-C-terminal Gly-Gly-AMP + S-sulfanyl-L-cysteinyl-[cysteine desulfurase] + AH2 = [ThiS sulfur-carrier protein]-C-terminal-Gly-aminoethanethioate + L-cysteinyl-[cysteine desulfurase] + A + AMP + 2 H(+). It participates in cofactor biosynthesis; thiamine diphosphate biosynthesis. Its function is as follows. Catalyzes the ATP-dependent transfer of a sulfur to tRNA to produce 4-thiouridine in position 8 of tRNAs, which functions as a near-UV photosensor. Also catalyzes the transfer of sulfur to the sulfur carrier protein ThiS, forming ThiS-thiocarboxylate. This is a step in the synthesis of thiazole, in the thiamine biosynthesis pathway. The sulfur is donated as persulfide by IscS. In Histophilus somni (strain 2336) (Haemophilus somnus), this protein is tRNA sulfurtransferase.